Consider the following 163-residue polypeptide: 2,3-dimethylmalate dehydratase small subunit (163 aa).

It belongs to the LeuD family. LeuD type 2 subfamily. As to quaternary structure, heterodimer of a large and a small subunit.

It catalyses the reaction (2R,3S)-2,3-dimethylmalate = dimethylmaleate + H2O. It functions in the pathway cofactor degradation; nicotinate degradation; propanoate and pyruvate from 6-hydroxynicotinate: step 7/8. In Eubacterium barkeri (Clostridium barkeri), this protein is 2,3-dimethylmalate dehydratase small subunit.